Here is a 611-residue protein sequence, read N- to C-terminus: Dual specificity protein phosphatase CDC14AB (611 aa).

The interval 23–178 (DLLGASEFIK…ALQHGFLNFE (156 aa)) is a. The interval 179 to 192 (TFDVNEYEHYERVE) is linker. The tract at residues 193–359 (NGDLNWITPG…HGDSLRSKQR (167 aa)) is b. The 159-residue stretch at 194-352 (GDLNWITPGK…KQASLWAHGD (159 aa)) folds into the Tyrosine-protein phosphatase domain. The Phosphocysteine intermediate role is filled by Cys294. A disordered region spans residues 408-611 (KLRALKGRRQ…PSLQSEYVQY (204 aa)). Positions 456 to 490 (SPLKSSKVPASSSSSSSSSSVSASAKRIGRSSSSS) are enriched in low complexity. A compositionally biased stretch (polar residues) spans 491–511 (TNLKSTRLASSLGNLYEPNTE). Positions 512-553 (SISSGKPPSPSSFTPHPVRTTYNYHYEVNNNNNQYSTTSSPS) are enriched in low complexity. 2 stretches are compositionally biased toward polar residues: residues 554-569 (KSLG…SGAS) and 591-611 (GLST…YVQY).

Belongs to the protein-tyrosine phosphatase family. Non-receptor class CDC14 subfamily.

It is found in the nucleus. Its subcellular location is the cytoplasm. The protein resides in the cytoskeleton. It localises to the microtubule organizing center. The protein localises to the centrosome. It is found in the spindle pole. Its subcellular location is the spindle. The protein resides in the cell projection. It localises to the kinocilium. It carries out the reaction O-phospho-L-tyrosyl-[protein] + H2O = L-tyrosyl-[protein] + phosphate. It catalyses the reaction O-phospho-L-seryl-[protein] + H2O = L-seryl-[protein] + phosphate. The catalysed reaction is O-phospho-L-threonyl-[protein] + H2O = L-threonyl-[protein] + phosphate. Its function is as follows. Dual-specificity phosphatase. Required for centrosome separation and productive cytokinesis during cell division. Dephosphorylates SIRT2 around early anaphase. May dephosphorylate the APC subunit FZR1/CDH1, thereby promoting APC-FZR1 dependent degradation of mitotic cyclins and subsequent exit from mitosis. The polypeptide is Dual specificity protein phosphatase CDC14AB (cdc14ab) (Danio rerio (Zebrafish)).